Here is a 331-residue protein sequence, read N- to C-terminus: Holliday junction branch migration complex subunit RuvB (331 aa).

The tract at residues 1–182 is large ATPase domain (RuvB-L); the sequence is MDDRMVDQAL…FGVHLRLEYY (182 aa). ATP-binding positions include leucine 21, arginine 22, glycine 63, lysine 66, threonine 67, threonine 68, 129–131, arginine 172, tyrosine 182, and arginine 219; that span reads EDF. Threonine 67 lines the Mg(2+) pocket. A small ATPAse domain (RuvB-S) region spans residues 183-253; it reads NENDLKEIII…TTKQALQLLQ (71 aa). The head domain (RuvB-H) stretch occupies residues 256 to 331; sequence AEGLDYIDHK…AYEHFKNFNK (76 aa). Arginine 292, arginine 311, and arginine 316 together coordinate DNA.

It belongs to the RuvB family. As to quaternary structure, homohexamer. Forms an RuvA(8)-RuvB(12)-Holliday junction (HJ) complex. HJ DNA is sandwiched between 2 RuvA tetramers; dsDNA enters through RuvA and exits via RuvB. An RuvB hexamer assembles on each DNA strand where it exits the tetramer. Each RuvB hexamer is contacted by two RuvA subunits (via domain III) on 2 adjacent RuvB subunits; this complex drives branch migration. In the full resolvosome a probable DNA-RuvA(4)-RuvB(12)-RuvC(2) complex forms which resolves the HJ.

It is found in the cytoplasm. It carries out the reaction ATP + H2O = ADP + phosphate + H(+). In terms of biological role, the RuvA-RuvB-RuvC complex processes Holliday junction (HJ) DNA during genetic recombination and DNA repair, while the RuvA-RuvB complex plays an important role in the rescue of blocked DNA replication forks via replication fork reversal (RFR). RuvA specifically binds to HJ cruciform DNA, conferring on it an open structure. The RuvB hexamer acts as an ATP-dependent pump, pulling dsDNA into and through the RuvAB complex. RuvB forms 2 homohexamers on either side of HJ DNA bound by 1 or 2 RuvA tetramers; 4 subunits per hexamer contact DNA at a time. Coordinated motions by a converter formed by DNA-disengaged RuvB subunits stimulates ATP hydrolysis and nucleotide exchange. Immobilization of the converter enables RuvB to convert the ATP-contained energy into a lever motion, pulling 2 nucleotides of DNA out of the RuvA tetramer per ATP hydrolyzed, thus driving DNA branch migration. The RuvB motors rotate together with the DNA substrate, which together with the progressing nucleotide cycle form the mechanistic basis for DNA recombination by continuous HJ branch migration. Branch migration allows RuvC to scan DNA until it finds its consensus sequence, where it cleaves and resolves cruciform DNA. In Staphylococcus haemolyticus (strain JCSC1435), this protein is Holliday junction branch migration complex subunit RuvB.